Here is a 316-residue protein sequence, read N- to C-terminus: MSGEGEIELLEAEERVVVVPPTQTAERIDRFLAGAMPDLSRAQVQRLIEQGFVLYDGRSPRASQPVRPGAVIQLTIPPPIPTELVAEPIPLDVVYEDADIAVINKPAGMVVHPAPGHPRGTLVNALLARYPDLAIGGELRPGIVHRLDRDTSGLLVIARHDQAMRSLVDQQQARRMRKIYQALVIGRPPETGTIDAPIGRDPRDRLRMAVVPDGRPARTHYRLLDTFGDYSLLEVQLETGRTHQIRVHLRHLGYPIVGDPVYGPRRSHLHLSRQFLHAAYLGLVHPRSGRWQEFTAPLPADLQIVLRQLQDRASYH.

In terms of domain architecture, S4 RNA-binding spans 26-98 (ERIDRFLAGA…IPLDVVYEDA (73 aa)). Aspartate 148 is a catalytic residue.

The protein belongs to the pseudouridine synthase RluA family.

It catalyses the reaction a uridine in RNA = a pseudouridine in RNA. This is an uncharacterized protein from Chloroflexus aurantiacus (strain ATCC 29366 / DSM 635 / J-10-fl).